The primary structure comprises 1211 residues: A disintegrin and metalloproteinase with thrombospondin motifs 2 (1211 aa).

A signal peptide spans 1–29 (MDPPAGAARRLLCPALLLLLLLLPPPLLP). Residues 30-253 (PPPPPANARL…GVLEEHANSS (224 aa)) constitute a propeptide that is removed on maturation. N-linked (GlcNAc...) asparagine glycans are attached at residues N112 and N251. In terms of domain architecture, Peptidase M12B spans 266 to 470 (YNIEVLLGVD…HSYDCLLDDP (205 aa)). 10 disulfides stabilise this stretch: C343/C392, C386/C465, C425/C451, C492/C517, C503/C526, C512/C545, C539/C550, C573/C610, C577/C615, and C588/C600. H408 provides a ligand contact to Zn(2+). E409 is a catalytic residue. Zn(2+)-binding residues include H412 and H418. A Disintegrin domain is found at 480–560 (QLPGLHYSMN…IWLTPDILKR (81 aa)). Positions 561–616 (DGSWGAWSPFGSCSRTCGTGVKFRTRQCDNPHPANGGRTCSGLAYDFQLCSRQDCP) constitute a TSP type-1 1 domain. The Cell attachment site motif lies at 691 to 693 (RGD). Positions 723–851 (KVVKGTFTRS…NVDDNNVLEE (129 aa)) are spacer. TSP type-1 domains follow at residues 854–912 (VVYE…NPQE), 914–971 (SQPV…RACS), and 975–1029 (CPGR…GPCP). 2 N-linked (GlcNAc...) asparagine glycosylation sites follow: N949 and N993. 3 cysteine pairs are disulfide-bonded: C987–C1023, C991–C1028, and C1002–C1012. Residue N1031 is glycosylated (N-linked (GlcNAc...) asparagine). One can recognise a PLAC domain in the interval 1059–1097 (SKGHCQGDKSIFCRMEVLSRYCSIPGYNKLCCKSCNLYN). 3 N-linked (GlcNAc...) asparagine glycosylation sites follow: N1098, N1145, and N1150. A disordered region spans residues 1170–1191 (LEDEVQPPNLIPRRPSPYEKTR).

May belong to a multimeric complex. Binds specifically to collagen type XIV. Zn(2+) is required as a cofactor. In terms of processing, the precursor is cleaved by a furin endopeptidase. Post-translationally, glycosylated. Can be O-fucosylated by POFUT2 on a serine or a threonine residue found within the consensus sequence C1-X(2)-(S/T)-C2-G of the TSP type-1 repeat domains where C1 and C2 are the first and second cysteine residue of the repeat, respectively. Fucosylated repeats can then be further glycosylated by the addition of a beta-1,3-glucose residue by the glucosyltransferase, B3GALTL. Fucosylation mediates the efficient secretion of ADAMTS family members. Can also be C-glycosylated with one or two mannose molecules on tryptophan residues within the consensus sequence W-X-X-W of the TPRs, and N-glycosylated. These other glycosylations can also facilitate secretion. In terms of tissue distribution, expressed at high level in skin, bone, tendon and aorta and at low levels in thymus and brain.

It is found in the secreted. The protein localises to the extracellular space. It localises to the extracellular matrix. It catalyses the reaction Cleaves the N-propeptide of collagen chain alpha1(I) at Pro-|-Gln and of alpha1(II) and alpha2(I) at Ala-|-Gln.. Cleaves the propeptides of type I and II collagen prior to fibril assembly. Does not act on type III collagen. Cleaves lysyl oxidase LOX at a site downstream of its propeptide cleavage site to produce a short LOX form with reduced collagen-binding activity. This chain is A disintegrin and metalloproteinase with thrombospondin motifs 2 (ADAMTS2), found in Homo sapiens (Human).